A 451-amino-acid polypeptide reads, in one-letter code: Chromosomal replication initiator protein DnaA (451 aa).

A domain I, interacts with DnaA modulators region spans residues 1–73; the sequence is MQDNLPQIWE…SNALKQTTSK (73 aa). The tract at residues 73–113 is domain II; sequence KNFEIRFIVPSEEKISKTEESQKKLEGSVNISVASDQFVSN. The interval 114-330 is domain III, AAA+ region; the sequence is NLNPKYTFDT…GALIRIVAYS (217 aa). ATP-binding residues include Gly158, Gly160, Lys161, and Thr162. Residues 331–451 are domain IV, binds dsDNA; it reads SLTNSEITVE…ERIAKEIKGD (121 aa).

This sequence belongs to the DnaA family. Oligomerizes as a right-handed, spiral filament on DNA at oriC.

It is found in the cytoplasm. Plays an essential role in the initiation and regulation of chromosomal replication. ATP-DnaA binds to the origin of replication (oriC) to initiate formation of the DNA replication initiation complex once per cell cycle. Binds the DnaA box (a 9 base pair repeat at the origin) and separates the double-stranded (ds)DNA. Forms a right-handed helical filament on oriC DNA; dsDNA binds to the exterior of the filament while single-stranded (ss)DNA is stabiized in the filament's interior. The ATP-DnaA-oriC complex binds and stabilizes one strand of the AT-rich DNA unwinding element (DUE), permitting loading of DNA polymerase. After initiation quickly degrades to an ADP-DnaA complex that is not apt for DNA replication. Binds acidic phospholipids. The polypeptide is Chromosomal replication initiator protein DnaA (Alkaliphilus oremlandii (strain OhILAs) (Clostridium oremlandii (strain OhILAs))).